The chain runs to 510 residues: Protein PLASTID TRANSCRIPTIONALLY ACTIVE 16, chloroplastic (510 aa).

The segment covering M1 to P14 has biased composition (polar residues). The N-terminal 19 residues, M1 to R19, are a transit peptide targeting the chloroplast. Disordered regions lie at residues M1 to K24 and L38 to Q58. Residues T41 to Q51 show a composition bias toward basic and acidic residues. I94–P123 is an NADP(+) binding site. Residues A354 to K403 adopt a coiled-coil conformation. S395 carries the post-translational modification Phosphoserine. A Phosphothreonine; by STN7 modification is found at T451. The disordered stretch occupies residues R453–R493. Positions K479 to R493 are enriched in basic and acidic residues.

It belongs to the NAD(P)-dependent epimerase/dehydratase family. In terms of assembly, component of the plastid transcriptionally active chromosome required for plastid gene expression. Interacts with DEGP1 under high light conditions and maybe its degradation target. Excluded from chloroplast nucleoid when phosphorylated on Thr-451 by STN7 that may regulate membrane-anchoring functions of the nucleoid.

It localises to the plastid. The protein localises to the chloroplast stroma. It is found in the chloroplast nucleoid. The protein resides in the chloroplast thylakoid membrane. Its function is as follows. Probably involved in the regulation of plastid gene expression. The sequence is that of Protein PLASTID TRANSCRIPTIONALLY ACTIVE 16, chloroplastic from Arabidopsis thaliana (Mouse-ear cress).